The sequence spans 465 residues: Phosphatidylserine synthase 1 (465 aa).

The Cytoplasmic segment spans residues 1–35; that stretch reads MVSAMRSRTLSKDDVNYKMHFRMINEQQVEDITID. A helical transmembrane segment spans residues 36–56; sequence FFYKPHTITLLTFTTVSLMYF. Residues 57–68 are Lumenal-facing; sequence AFTRENTSQEDN. A helical transmembrane segment spans residues 69-89; the sequence is IWKGILSVIFFFLIISVLAFP. Over 90-102 the chain is Cytoplasmic; that stretch reads NGPFTRPHPAIWR. A helical transmembrane segment spans residues 103 to 123; sequence MVFGLSVLYFLFLVFLLFLNV. Over 124-186 the chain is Lumenal; sequence EQVKAVMYWL…AMKALLIRSY (63 aa). The chain crosses the membrane as a helical span at residues 187–207; it reads GLCWTISITWEMTELFFMHLL. Residues 208–216 lie on the Cytoplasmic side of the membrane; sequence PNFAECWWD. A helical membrane pass occupies residues 217–237; that stretch reads QVILDILLCNGGGILLGMVVC. At 238–286 the chain is on the lumenal side; that stretch reads RFLEMRTYHWASFKDIHTTTGKIKRAVLQFTPASWIYVRWFDPKSSFQR. The chain crosses the membrane as a helical span at residues 287-307; it reads VAGVYLFMIIWQLTELNTFFL. Residues 308–319 are Cytoplasmic-facing; that stretch reads KHIFVFQASHPL. A helical transmembrane segment spans residues 320–342; that stretch reads SWCRILFIGIITAPTVRQYYAYL. Residues 343-355 are Lumenal-facing; the sequence is TDTQCKRVGTQCW. The chain crosses the membrane as a helical span at residues 356–376; it reads VFGAIAFLEATVCIKFGQDLF. Over 377-383 the chain is Cytoplasmic; it reads SKTHLLY. A helical membrane pass occupies residues 384 to 404; that stretch reads VFLWLFSVAVITFLCLYGMVW. Residues 405–465 are Lumenal-facing; sequence YADYCGQREK…GKVTNGVGKK (61 aa). The tract at residues 440–465 is disordered; it reads PVKQNEGTSRRKNRHKGKVTNGVGKK. Over residues 449 to 465 the composition is skewed to basic residues; sequence RRKNRHKGKVTNGVGKK.

It belongs to the phosphatidyl serine synthase family.

The protein localises to the endoplasmic reticulum membrane. It carries out the reaction a 1,2-diacyl-sn-glycero-3-phosphoethanolamine + L-serine = a 1,2-diacyl-sn-glycero-3-phospho-L-serine + ethanolamine. It catalyses the reaction a 1,2-diacyl-sn-glycero-3-phosphocholine + L-serine = a 1,2-diacyl-sn-glycero-3-phospho-L-serine + choline. The protein operates within phospholipid metabolism; phosphatidylserine biosynthesis. In terms of biological role, catalyzes a base-exchange reaction in which the polar head group of phosphatidylethanolamine (PE) or phosphatidylcholine (PC) is replaced by L-serine. Catalyzes mainly the conversion of phosphatidylcholine but also converts, in vitro and to a lesser extent, phosphatidylethanolamine. In Xenopus tropicalis (Western clawed frog), this protein is Phosphatidylserine synthase 1 (ptdss1).